Reading from the N-terminus, the 1260-residue chain is uncharacterized protein (1260 aa).

It belongs to the oxoprolinase family.

This is an uncharacterized protein from Schizosaccharomyces pombe (strain 972 / ATCC 24843) (Fission yeast).